The sequence spans 61 residues: Small ribosomal subunit protein uS14 (61 aa).

Zn(2+)-binding residues include Cys24, Cys27, Cys40, and Cys43.

This sequence belongs to the universal ribosomal protein uS14 family. Zinc-binding uS14 subfamily. Part of the 30S ribosomal subunit. Contacts proteins S3 and S10. Zn(2+) is required as a cofactor.

Its function is as follows. Binds 16S rRNA, required for the assembly of 30S particles and may also be responsible for determining the conformation of the 16S rRNA at the A site. This Thermosipho melanesiensis (strain DSM 12029 / CIP 104789 / BI429) protein is Small ribosomal subunit protein uS14.